The following is a 430-amino-acid chain: Inner membrane transport protein YbaT (430 aa).

The Cytoplasmic portion of the chain corresponds to 1–14 (MMNTEGNNGNKPLG). The chain crosses the membrane as a helical span at residues 15 to 35 (LWNVVSIGIGAMVGAGIFALL). Over 36 to 38 (GQA) the chain is Periplasmic. The chain crosses the membrane as a helical span at residues 39 to 59 (ALLMEASTWVAFAFGGIVAMF). The Cytoplasmic portion of the chain corresponds to 60–88 (SGYAYARLGASYPSNGGIIDFFRRGLGNG). Residues 89 to 109 (VFSLALSLLYLLTLAVSIAMV) form a helical membrane-spanning segment. At 110-128 (ARAFGAYAVQFLHEGSQEE) the chain is on the periplasmic side. The chain crosses the membrane as a helical span at residues 129 to 149 (HLILLYALGIIAVMTLFNSLS). Residues 150-157 (NHAVGRLE) are Cytoplasmic-facing. A helical membrane pass occupies residues 158 to 178 (VILVGIKMMILLLLIIAGVWS). The Periplasmic portion of the chain corresponds to 179 to 192 (LQPAHISVSAPPSS). Residues 193 to 213 (GAFFSCIGITFLAYAGFGMMA) form a helical membrane-spanning segment. Topologically, residues 214-228 (NAADKVKDPQVIMPR) are cytoplasmic. Residues 229–249 (AFLVAIGVTTLLYISLALVLL) form a helical membrane-spanning segment. Residues 250-272 (SDVSALELEKYADTAVAQAASPL) lie on the Periplasmic side of the membrane. A helical membrane pass occupies residues 273–293 (LGHVGYVIVVIGALLATASAI). Residues 294-325 (NANLFAVFNIMDNMGSERELPKLMNKSLWRQS) lie on the Cytoplasmic side of the membrane. A helical membrane pass occupies residues 326–346 (TWGNIIVVVLIMLMTAALNLG). A topological domain (periplasmic) is located at residue Ser347. The helical transmembrane segment at 348-368 (LASVASATFLICYLAVFVVAI) threads the bilayer. Residues 369–379 (RLRHDIHASLP) are Cytoplasmic-facing. A helical transmembrane segment spans residues 380-400 (ILIVGTLVMLLVIVGFIYSLW). Over 401 to 403 (SQG) the chain is Periplasmic. A helical transmembrane segment spans residues 404-424 (SRALIWIIGSLLLSLIVAMVM). Residues 425 to 430 (KRNKTV) lie on the Cytoplasmic side of the membrane.

It belongs to the amino acid-polyamine-organocation (APC) superfamily.

It localises to the cell inner membrane. Probable amino-acid or metabolite transport protein. In Escherichia coli (strain K12), this protein is Inner membrane transport protein YbaT (ybaT).